Reading from the N-terminus, the 131-residue chain is 14.7 kDa heat shock protein (131 aa).

Polar residues predominate over residues 1–11 (MSRNMEVNAGS). Residues 1-20 (MSRNMEVNAGSSGEIPSPIR) are disordered. The 110-residue stretch at 22-131 (RFQKSGSQAV…INVKERILHY (110 aa)) folds into the sHSP domain.

This sequence belongs to the small heat shock protein (HSP20) family. In terms of assembly, may form oligomeric structures.

Its subcellular location is the cytoplasm. The protein is 14.7 kDa heat shock protein (HSP14.7) of Arabidopsis thaliana (Mouse-ear cress).